A 166-amino-acid polypeptide reads, in one-letter code: Ribosome maturation factor RimM (166 aa).

One can recognise a PRC barrel domain in the interval 94-165 (EGEYYLGKLI…TIELKVLDLL (72 aa)).

This sequence belongs to the RimM family. As to quaternary structure, binds ribosomal protein uS19.

It localises to the cytoplasm. An accessory protein needed during the final step in the assembly of 30S ribosomal subunit, possibly for assembly of the head region. Essential for efficient processing of 16S rRNA. May be needed both before and after RbfA during the maturation of 16S rRNA. It has affinity for free ribosomal 30S subunits but not for 70S ribosomes. This Borreliella afzelii (strain PKo) (Borrelia afzelii) protein is Ribosome maturation factor RimM.